We begin with the raw amino-acid sequence, 257 residues long: uncharacterized protein (257 aa).

This is an uncharacterized protein from Mycobacterium tuberculosis (strain CDC 1551 / Oshkosh).